Here is a 275-residue protein sequence, read N- to C-terminus: Peflin (275 aa).

Tandem repeats lie at residues 21-29 (PPGGYYPGP), 31-39 (HGGGQYGSG), 41-49 (PPGGGYGAP), 50-59 (APGGPYGYPS), 60-68 (AGGVPSGTP), 76-84 (PPGGPYGQL), 85-91 (PPGGPYG), and 92-100 (TQPGHYGQG). Disordered stretches follow at residues 21 to 45 (PPGG…PGGG) and 59 to 103 (SAGG…GGVP). An 8 X 9 AA approximate tandem repeat of [AP]-P-G-G-P-Y-G-G-P-P region spans residues 21-100 (PPGGYYPGPP…GTQPGHYGQG (80 aa)). Over residues 31-45 (HGGGQYGSGLPPGGG) the composition is skewed to gly residues. Residues 59-70 (SAGGVPSGTPSG) show a composition bias toward low complexity. EF-hand domains follow at residues 105–140 (NVDP…SNWS), 146–174 (TCLM…WKFL), 172–207 (KFLQ…MGYN), 208–244 (LSPQ…LQVL), and 245–274 (TEAF…ASRM). Ca(2+) contacts are provided by Asp-118, Asp-120, Ser-122, Tyr-124, and Glu-129. Residues Asp-185, Asp-187, Ser-189, Ser-191, and Glu-196 each coordinate Ca(2+). The segment at 195–275 (TELQQALSQM…FVTMTASRML (81 aa)) is required for interaction with PDCD6.

As to quaternary structure, heterodimer; heterodimerizes (via the EF-hand 5) with PDCD6. Dissociates from PDCD6 in presence of calcium. Post-translationally, ubiquitinated by the BCR(KLHL12) E3 ubiquitin ligase complex.

The protein resides in the cytoplasm. The protein localises to the endoplasmic reticulum. It is found in the membrane. Its subcellular location is the cytoplasmic vesicle. It localises to the COPII-coated vesicle membrane. Its function is as follows. Calcium-binding protein that acts as an adapter that bridges unrelated proteins or stabilizes weak protein-protein complexes in response to calcium. Together with PDCD6, acts as a calcium-dependent adapter for the BCR(KLHL12) complex, a complex involved in endoplasmic reticulum (ER)-Golgi transport by regulating the size of COPII coats. In response to cytosolic calcium increase, the heterodimer formed with PDCD6 interacts with, and bridges together the BCR(KLHL12) complex and SEC31 (SEC31A or SEC31B), promoting monoubiquitination of SEC31 and subsequent collagen export, which is required for neural crest specification. Its role in the heterodimer formed with PDCD6 is however unclear: some evidence shows that PEF1 and PDCD6 work together and promote association between PDCD6 and SEC31 in presence of calcium. Other reports show that PEF1 dissociates from PDCD6 in presence of calcium, and may act as a negative regulator of PDCD6. Also acts as a negative regulator of ER-Golgi transport; possibly by inhibiting interaction between PDCD6 and SEC31. This Mus musculus (Mouse) protein is Peflin.